The primary structure comprises 447 residues: ATP-dependent protease ATPase subunit HslU (447 aa).

Residues Ile17, 59 to 64 (GVGKTE), Asp256, Glu321, and Arg393 each bind ATP.

Belongs to the ClpX chaperone family. HslU subfamily. In terms of assembly, a double ring-shaped homohexamer of HslV is capped on each side by a ring-shaped HslU homohexamer. The assembly of the HslU/HslV complex is dependent on binding of ATP.

The protein resides in the cytoplasm. ATPase subunit of a proteasome-like degradation complex; this subunit has chaperone activity. The binding of ATP and its subsequent hydrolysis by HslU are essential for unfolding of protein substrates subsequently hydrolyzed by HslV. HslU recognizes the N-terminal part of its protein substrates and unfolds these before they are guided to HslV for hydrolysis. This chain is ATP-dependent protease ATPase subunit HslU, found in Pseudomonas putida (strain W619).